The following is a 1072-amino-acid chain: Carbamoyl phosphate synthase large chain (1072 aa).

A carboxyphosphate synthetic domain region spans residues 1–401; that stretch reads MPKRLDINTI…SLLKAVRSLE (401 aa). Positions 129, 169, 175, 176, 208, 210, 215, 241, 242, 243, 284, and 298 each coordinate ATP. The ATP-grasp 1 domain occupies 133–327; that stretch reads RTLMQELNEP…IAKLAAKIAV (195 aa). Residues Q284, E298, and N300 each contribute to the Mg(2+) site. Positions 284, 298, and 300 each coordinate Mn(2+). Residues 402 to 546 are oligomerization domain; that stretch reads LGIYHLELDH…YSTYADENES (145 aa). Residues 547 to 929 form a carbamoyl phosphate synthetic domain region; it reads IVTDRKSVVV…ALYKGLVASG (383 aa). The 191-residue stretch at 671 to 861 folds into the ATP-grasp 2 domain; it reads EAALTKLGIP…MANVATKVIL (191 aa). Residues R707, R746, E752, G777, V778, H779, S780, Q820, and E832 each contribute to the ATP site. Q820, E832, and N834 together coordinate Mg(2+). Mn(2+) contacts are provided by Q820, E832, and N834. An MGS-like domain is found at 930–1072; that stretch reads INIPTHGSVI…QTKRHEVVHA (143 aa). The tract at residues 930–1072 is allosteric domain; it reads INIPTHGSVI…QTKRHEVVHA (143 aa).

The protein belongs to the CarB family. Composed of two chains; the small (or glutamine) chain promotes the hydrolysis of glutamine to ammonia, which is used by the large (or ammonia) chain to synthesize carbamoyl phosphate. Tetramer of heterodimers (alpha,beta)4. It depends on Mg(2+) as a cofactor. Requires Mn(2+) as cofactor.

The enzyme catalyses hydrogencarbonate + L-glutamine + 2 ATP + H2O = carbamoyl phosphate + L-glutamate + 2 ADP + phosphate + 2 H(+). It carries out the reaction hydrogencarbonate + NH4(+) + 2 ATP = carbamoyl phosphate + 2 ADP + phosphate + 2 H(+). Its pathway is amino-acid biosynthesis; L-arginine biosynthesis; carbamoyl phosphate from bicarbonate: step 1/1. It functions in the pathway pyrimidine metabolism; UMP biosynthesis via de novo pathway; (S)-dihydroorotate from bicarbonate: step 1/3. Its function is as follows. Large subunit of the glutamine-dependent carbamoyl phosphate synthetase (CPSase). CPSase catalyzes the formation of carbamoyl phosphate from the ammonia moiety of glutamine, carbonate, and phosphate donated by ATP, constituting the first step of 2 biosynthetic pathways, one leading to arginine and/or urea and the other to pyrimidine nucleotides. The large subunit (synthetase) binds the substrates ammonia (free or transferred from glutamine from the small subunit), hydrogencarbonate and ATP and carries out an ATP-coupled ligase reaction, activating hydrogencarbonate by forming carboxy phosphate which reacts with ammonia to form carbamoyl phosphate. This is Carbamoyl phosphate synthase large chain from Bacillus thuringiensis (strain Al Hakam).